A 262-amino-acid chain; its full sequence is Flap endonuclease Xni (262 aa).

Aspartate 105 contacts Mg(2+). The 5'-3' exonuclease domain maps to 162 to 257; that stretch reads ERSQFLDLMA…FRVIDSPPEK (96 aa). The K(+) site is built by leucine 172, alanine 173, proline 181, isoleucine 183, and isoleucine 186. Positions 185-190 are interaction with DNA; that stretch reads GIGPKS.

The protein belongs to the Xni family. The cofactor is Mg(2+). It depends on K(+) as a cofactor.

Its function is as follows. Has flap endonuclease activity. During DNA replication, flap endonucleases cleave the 5'-overhanging flap structure that is generated by displacement synthesis when DNA polymerase encounters the 5'-end of a downstream Okazaki fragment. This is Flap endonuclease Xni from Shewanella baltica (strain OS155 / ATCC BAA-1091).